Here is a 324-residue protein sequence, read N- to C-terminus: Pseudouridylate synthase RPUSD4, mitochondrial (324 aa).

Residues 1 to 11 (MAAAGGGATRG) constitute a mitochondrion transit peptide. Asp105 is a catalytic residue.

Belongs to the pseudouridine synthase RluA family.

The protein localises to the mitochondrion matrix. It is found in the nucleus. The protein resides in the cytoplasm. It carries out the reaction uridine in 5S rRNA = pseudouridine in 5S rRNA. The catalysed reaction is a uridine in tRNA = a pseudouridine in tRNA. It catalyses the reaction a uridine in mRNA = a pseudouridine in mRNA. Functionally, catalyzes uridine to pseudouridine isomerization (pseudouridylation) of different mitochondrial RNA substrates. Acts on position 1397 in 16S mitochondrial ribosomal RNA (16S mt-rRNA). This modification is required for the assembly of 16S mt-rRNA into a functional mitochondrial ribosome. Acts on position 39 in mitochondrial tRNA(Phe). Also catalyzes pseudouridylation of mRNAs in nucleus: acts as a regulator of pre-mRNA splicing by mediating pseudouridylation of pre-mRNAs at locations associated with alternatively spliced regions. Pseudouridylation of pre-mRNAs near splice sites directly regulates mRNA splicing and mRNA 3'-end processing. The polypeptide is Pseudouridylate synthase RPUSD4, mitochondrial (Xenopus tropicalis (Western clawed frog)).